The primary structure comprises 839 residues: Autophagy-related protein 9A (839 aa).

The residue at position 2 (A2) is an N-acetylalanine. Residues 2-61 (AQFDTEYQRLEASYSDSPPGEEDLLVHVAEGSKSPWHHIENLDLFFSRVYNLHQKNGFTC) lie on the Cytoplasmic side of the membrane. A Tyrosine-based sorting signal motif is present at residues 8 to 11 (YQRL). S14, S16, and S18 each carry phosphoserine. The helical transmembrane segment at 62 to 84 (MLIGEMFELMQFLFVVAFTTFLV) threads the bilayer. The Lumenal segment spans residues 85–128 (SCVDYDILFANKMVNHSLHPTEPVKVTLPDAFLPAQVCSARIQE). N-linked (GlcNAc...) asparagine glycosylation occurs at N99. The chain crosses the membrane as a helical span at residues 129-154 (NGSLITILVIAGVFWIHRLIKFIYNI). At 155-290 (CCYWEIHSFY…ELAQRLSNRI (136 aa)) the chain is on the cytoplasmic side. Residues 291–301 (LWIGIANFLLC) lie within the membrane without spanning it. Over 302 to 319 (PLILIWQILYAFFSYAEV) the chain is Cytoplasmic. Residues 320–328 (LKREPGALG) lie within the membrane without spanning it. Over 329–371 (ARCWSLYGRCYLRHFNELEHELQSRLNRGYKPASKYMNCFLSP) the chain is Cytoplasmic. Residues 372–397 (LLTLLAKNGAFFAGSILAVLIALTIY) traverse the membrane as a helical segment. At 398–406 (DEDVLAVEH) the chain is on the lumenal side. The chain crosses the membrane as a helical span at residues 407–424 (VLTTVTLLGVTVTVCRSF). Residues 425 to 470 (IPDQHMVFCPEQLLRVILAHIHYMPDHWQGNAHRSQTRDEFAQLFQ) are Cytoplasmic-facing. The stretch at 471–480 (YKAVFILEEL) is an intramembrane region. Residues 481–483 (LSP) are Cytoplasmic-facing. Residues 484–492 (IVTPLILIF) lie within the membrane without spanning it. Residues 493–839 (CLRPRALEII…DELPPQVHKV (347 aa)) lie on the Cytoplasmic side of the membrane. S656 bears the Phosphoserine mark. 2 disordered regions span residues 657–686 (PLQPGAAPQGRVPSTMTGSGVDARTASSGS) and 717–839 (HKQQ…VHKV). The span at 724-736 (EPERHVWHRRESD) shows a compositional bias: basic and acidic residues. 4 positions are modified to phosphoserine: S735, S738, S741, and S828. Acidic residues-rich tracts occupy residues 737–747 (ESGESAPEEGG) and 823–832 (VPEEGSEDEL).

Belongs to the ATG9 family. As to quaternary structure, homotrimer; forms a homotrimer with a central pore that forms a path between the two membrane leaflets. Interacts (via cytoplasmic its C-terminus) with ATG2A. Interacts with SUPT20H. Interacts (via the tyrosine-based sorting signal motif) with AP4M1; promoting association with the AP-4 complex. Interacts with ARFIP1 and ARFIP2. Interacts with ATG4A; the interaction is direct and promotes ATG9A trafficking. In terms of processing, ufmylated in a DDRGK1 dependent manner.

It localises to the preautophagosomal structure membrane. It is found in the cytoplasmic vesicle. Its subcellular location is the autophagosome membrane. The protein localises to the golgi apparatus. The protein resides in the trans-Golgi network membrane. It localises to the late endosome membrane. It is found in the recycling endosome membrane. Its subcellular location is the endoplasmic reticulum membrane. The protein localises to the mitochondrion membrane. The enzyme catalyses a 1,2-diacyl-sn-glycero-3-phosphocholine(in) = a 1,2-diacyl-sn-glycero-3-phosphocholine(out). It catalyses the reaction a 1,2-diacyl-sn-glycero-3-phospho-L-serine(in) = a 1,2-diacyl-sn-glycero-3-phospho-L-serine(out). The catalysed reaction is a 1,2-diacyl-sn-glycero-3-phosphoethanolamine(in) = a 1,2-diacyl-sn-glycero-3-phosphoethanolamine(out). Phospholipid scramblase involved in autophagy by mediating autophagosomal membrane expansion. Cycles between the preautophagosomal structure/phagophore assembly site (PAS) and the cytoplasmic vesicle pool and supplies membrane for the growing autophagosome. Lipid scramblase activity plays a key role in preautophagosomal structure/phagophore assembly by distributing the phospholipids that arrive through ATG2 (ATG2A or ATG2B) from the cytoplasmic to the luminal leaflet of the bilayer, thereby driving autophagosomal membrane expansion. Also required to supply phosphatidylinositol 4-phosphate to the autophagosome initiation site by recruiting the phosphatidylinositol 4-kinase beta (PI4KB) in a process dependent on ARFIP2, but not ARFIP1. In addition to autophagy, also plays a role in necrotic cell death. The protein is Autophagy-related protein 9A of Mus musculus (Mouse).